The chain runs to 474 residues: uncharacterized protein (474 aa).

Residues 374–398 (GLICYLALFSISLMIENIIGLTISL) form a helical membrane-spanning segment.

It localises to the membrane. This is an uncharacterized protein from Borreliella burgdorferi (strain ATCC 35210 / DSM 4680 / CIP 102532 / B31) (Borrelia burgdorferi).